The following is a 100-amino-acid chain: Urease subunit gamma (100 aa).

Belongs to the urease gamma subunit family. Heterotrimer of UreA (gamma), UreB (beta) and UreC (alpha) subunits. Three heterotrimers associate to form the active enzyme.

The protein localises to the cytoplasm. It catalyses the reaction urea + 2 H2O + H(+) = hydrogencarbonate + 2 NH4(+). It participates in nitrogen metabolism; urea degradation; CO(2) and NH(3) from urea (urease route): step 1/1. This Acetivibrio thermocellus (strain ATCC 27405 / DSM 1237 / JCM 9322 / NBRC 103400 / NCIMB 10682 / NRRL B-4536 / VPI 7372) (Clostridium thermocellum) protein is Urease subunit gamma.